The sequence spans 92 residues: Auxin-responsive protein SAUR28 (92 aa).

This sequence belongs to the ARG7 family. As to expression, higher expression in thermo-responsive cultivars (e.g. cv. Alst-1, cv. Ang-0 and cv. Com-0) than in low thermo-responsive cultivars (e.g. cv. Dja-1, cv. El-0 and cv. Kon).

The protein localises to the cell membrane. In terms of biological role, functions as a positive effector of cell expansion through modulation of auxin transport. Involved in thermo-responsiveness of plant architecture. Enhances plasma membrane H(+)-ATPase. This is Auxin-responsive protein SAUR28 from Arabidopsis thaliana (Mouse-ear cress).